We begin with the raw amino-acid sequence, 366 residues long: Protein-glutamate methylesterase/protein-glutamine glutaminase of group 2 operon (366 aa).

The Response regulatory domain maps to 19 to 136; it reads RVLIVDDSAM…GQGLPAIMRD (118 aa). D70 carries the post-translational modification 4-aspartylphosphate. The CheB-type methylesterase domain maps to 162-356; that stretch reads PGASEDWIHA…ARMMLAAAAD (195 aa). Residues S175, H201, and D298 contribute to the active site.

The protein belongs to the CheB family. Post-translationally, phosphorylated by CheA. Phosphorylation of the N-terminal regulatory domain activates the methylesterase activity.

It localises to the cytoplasm. It catalyses the reaction [protein]-L-glutamate 5-O-methyl ester + H2O = L-glutamyl-[protein] + methanol + H(+). The catalysed reaction is L-glutaminyl-[protein] + H2O = L-glutamyl-[protein] + NH4(+). Functionally, involved in chemotaxis. Part of a chemotaxis signal transduction system that modulates chemotaxis in response to various stimuli. Catalyzes the demethylation of specific methylglutamate residues introduced into the chemoreceptors (methyl-accepting chemotaxis proteins or MCP) by CheR. Also mediates the irreversible deamidation of specific glutamine residues to glutamic acid. This Cereibacter sphaeroides (Rhodobacter sphaeroides) protein is Protein-glutamate methylesterase/protein-glutamine glutaminase of group 2 operon.